We begin with the raw amino-acid sequence, 76 residues long: Small ribosomal subunit protein bS18 (76 aa).

Belongs to the bacterial ribosomal protein bS18 family. As to quaternary structure, part of the 30S ribosomal subunit. Forms a tight heterodimer with protein bS6.

Binds as a heterodimer with protein bS6 to the central domain of the 16S rRNA, where it helps stabilize the platform of the 30S subunit. The chain is Small ribosomal subunit protein bS18 from Neisseria gonorrhoeae (strain ATCC 700825 / FA 1090).